The sequence spans 235 residues: Dual specificity protein phosphatase 15 (235 aa).

Gly-2 is lipidated: N-myristoyl glycine. Residues 4–144 (GMTKVLPGLY…LEEFGWANSQ (141 aa)) enclose the Tyrosine-protein phosphatase domain. Cys-88 functions as the Phosphocysteine intermediate in the catalytic mechanism. The span at 183–193 (AASATTASSAA) shows a compositional bias: low complexity. Residues 183 to 212 (AASATTASSAAEGTLQRLVPRSPRDSHQPL) are disordered.

It belongs to the protein-tyrosine phosphatase family. Non-receptor class dual specificity subfamily. As to expression, isoform 1 is expressed in testis; predominantly in developing spermatocytes (at protein level). Isoform 2 is highly expressed in testis. Expressed in spinal cord and specifically in oligodendroglial cells. Expressed in embryonic brain cortex; down-regulated in mice with experimental autoimmune encephalomyelitis (EAE).

The protein localises to the cell membrane. It catalyses the reaction O-phospho-L-tyrosyl-[protein] + H2O = L-tyrosyl-[protein] + phosphate. The catalysed reaction is O-phospho-L-seryl-[protein] + H2O = L-seryl-[protein] + phosphate. It carries out the reaction O-phospho-L-threonyl-[protein] + H2O = L-threonyl-[protein] + phosphate. In terms of biological role, may dephosphorylate MAPK13, ATF2, ERBB3, PDGFRB and SNX6. Functionally, may play a role in the regulation of oligodendrocyte differentiation. May play a role in the regulation of myelin formation. Involved in the regulation of Erk1/2 phosphorylation in Schwann cells; the signaling may be linked to the regulation of myelination. This Mus musculus (Mouse) protein is Dual specificity protein phosphatase 15.